The primary structure comprises 520 residues: Transactivator/viroplasmin protein (520 aa).

2 disordered regions span residues 103-126 (SDFL…SVAP) and 487-520 (EDAS…KQVD).

It belongs to the caulimoviridae viroplasmin family.

The protein localises to the host cytoplasm. Its function is as follows. Enhances the ribosomal termination-reinitiation event leading to the translation of major open reading frames on the polycistronic viral RNAs. The polypeptide is Transactivator/viroplasmin protein (Arabidopsis thaliana (Mouse-ear cress)).